The primary structure comprises 606 residues: Ubiquitin-like modifier-activating enzyme ATG7 (606 aa).

Residues glycine 316–glycine 321 carry the GXGXXG motif motif. The active-site Glycyl thioester intermediate is cysteine 488. A homodimerization region spans residues alanine 567 to glycine 606.

The protein belongs to the ATG7 family. Homodimer. Interacts with ATG8 through a thioester bond between Cys-488 and the C-terminal Gly of ATG8 and with ATG12 through a thioester bond between Cys-488 and the C-terminal Gly of ATG12. Also interacts with ATG3.

It is found in the cytoplasm. The protein localises to the preautophagosomal structure. Its function is as follows. E1-like activating enzyme involved in the 2 ubiquitin-like systems required for cytoplasm to vacuole transport (Cvt) and autophagy. Activates ATG12 for its conjugation with ATG5 and ATG8 for its conjugation with phosphatidylethanolamine. Both systems are needed for the ATG8 association to Cvt vesicles and autophagosomes membranes. Autophagy is essential for maintenance of amino acid levels and protein synthesis under nitrogen starvation. Required for selective autophagic degradation of the nucleus (nucleophagy) as well as for mitophagy which contributes to regulate mitochondrial quantity and quality by eliminating the mitochondria to a basal level to fulfill cellular energy requirements and preventing excess ROS production. The sequence is that of Ubiquitin-like modifier-activating enzyme ATG7 from Kluyveromyces marxianus (strain DMKU3-1042 / BCC 29191 / NBRC 104275) (Yeast).